The sequence spans 435 residues: Adenylosuccinate synthetase (435 aa).

Residues 11–17 (GDEGKGK) and 39–41 (GHT) each bind GTP. Catalysis depends on aspartate 12, which acts as the Proton acceptor. The Mg(2+) site is built by aspartate 12 and glycine 39. IMP-binding positions include 12-15 (DEGK), 37-40 (NAGH), threonine 128, arginine 142, glutamine 223, threonine 238, and arginine 302. Histidine 40 serves as the catalytic Proton donor. Residue 298 to 304 (SVTGRPR) coordinates substrate. GTP-binding positions include arginine 304, 330 to 332 (KLD), and 412 to 414 (STG).

The protein belongs to the adenylosuccinate synthetase family. As to quaternary structure, homodimer. Mg(2+) serves as cofactor.

It is found in the cytoplasm. The catalysed reaction is IMP + L-aspartate + GTP = N(6)-(1,2-dicarboxyethyl)-AMP + GDP + phosphate + 2 H(+). The protein operates within purine metabolism; AMP biosynthesis via de novo pathway; AMP from IMP: step 1/2. Its function is as follows. Plays an important role in the de novo pathway of purine nucleotide biosynthesis. Catalyzes the first committed step in the biosynthesis of AMP from IMP. In Coxiella burnetii (strain RSA 331 / Henzerling II), this protein is Adenylosuccinate synthetase.